A 113-amino-acid polypeptide reads, in one-letter code: U11-theraphotoxin-Hhn1p (113 aa).

A signal peptide spans 1-21; it reads MNTVRVTFLLVFVLAVSLGQA. Residues 22–74 constitute a propeptide that is removed on maturation; the sequence is DKDENRMEMQEKTEQGKSYLDFAENLLLQKLEELEAKLLEEDSEESRNSRQKR. Residues 61–83 are disordered; the sequence is EEDSEESRNSRQKRCIGEGVPCD. Intrachain disulfides connect cysteine 75/cysteine 90, cysteine 82/cysteine 95, and cysteine 89/cysteine 110.

It belongs to the neurotoxin 14 (magi-1) family. 01 (HNTX-16) subfamily. In terms of tissue distribution, expressed by the venom gland.

The protein localises to the secreted. Functionally, probable ion channel inhibitor. This chain is U11-theraphotoxin-Hhn1p, found in Cyriopagopus hainanus (Chinese bird spider).